A 404-amino-acid chain; its full sequence is Acetate kinase (404 aa).

Residue Asn-7 coordinates Mg(2+). Lys-14 serves as a coordination point for ATP. Arg-95 provides a ligand contact to substrate. The active-site Proton donor/acceptor is the Asp-152. ATP-binding positions include 212–216, 286–288, and 334–338; these read HLGNG, DMR, and GIGEN. Residue Glu-388 participates in Mg(2+) binding.

The protein belongs to the acetokinase family. In terms of assembly, homodimer. Mg(2+) serves as cofactor. The cofactor is Mn(2+).

It localises to the cytoplasm. The catalysed reaction is acetate + ATP = acetyl phosphate + ADP. It participates in metabolic intermediate biosynthesis; acetyl-CoA biosynthesis; acetyl-CoA from acetate: step 1/2. Its function is as follows. Catalyzes the formation of acetyl phosphate from acetate and ATP. Can also catalyze the reverse reaction. The chain is Acetate kinase from Lawsonia intracellularis (strain PHE/MN1-00).